Here is a 346-residue protein sequence, read N- to C-terminus: Aspartate-semialdehyde dehydrogenase (346 aa).

NADP(+)-binding positions include Thr10–Gly13 and Arg38–Ser39. Arg98 serves as a coordination point for phosphate. Cys131 acts as the Acyl-thioester intermediate in catalysis. Position 158 (Gln158) interacts with substrate. Residue Ser161–Gly162 participates in NADP(+) binding. Position 228 (Lys228) interacts with phosphate. Arg250 serves as a coordination point for substrate. The active-site Proton acceptor is the His257. Asn326 is an NADP(+) binding site.

It belongs to the aspartate-semialdehyde dehydrogenase family. As to quaternary structure, homodimer.

It carries out the reaction L-aspartate 4-semialdehyde + phosphate + NADP(+) = 4-phospho-L-aspartate + NADPH + H(+). The protein operates within amino-acid biosynthesis; L-lysine biosynthesis via DAP pathway; (S)-tetrahydrodipicolinate from L-aspartate: step 2/4. Its pathway is amino-acid biosynthesis; L-methionine biosynthesis via de novo pathway; L-homoserine from L-aspartate: step 2/3. It functions in the pathway amino-acid biosynthesis; L-threonine biosynthesis; L-threonine from L-aspartate: step 2/5. In terms of biological role, catalyzes the NADPH-dependent formation of L-aspartate-semialdehyde (L-ASA) by the reductive dephosphorylation of L-aspartyl-4-phosphate. The protein is Aspartate-semialdehyde dehydrogenase of Mycolicibacterium smegmatis (Mycobacterium smegmatis).